Reading from the N-terminus, the 298-residue chain is uncharacterized protein (298 aa).

A run of 10 helical transmembrane segments spans residues 5 to 25, 36 to 56, 76 to 96, 97 to 117, 124 to 144, 147 to 167, 181 to 201, 216 to 236, 244 to 264, and 272 to 292; these read ILFGVSMILLANLCFGIMSAF, MENVFYRSITMTLLLLLIYPF, VVVGGLAMLAFFYNIEKISLA, TATAFSQCAPIYTVLLSPLLL, STLISACIGIVGVVLISDPSV, VGPVEIFMGILSGIFVSLAYI, VILAFAFGMSLLGLVGMFIDI, ILWISLIGISGTLGQYFLTYA, IIAPIEYTRIVWGLLFGLYLG, and SSLGVALILCSGLLIALPALL. The region spanning 17 to 141 is the EamA 1 domain; that stretch reads LCFGIMSAFV…GIVGVVLISD (125 aa). Positions 183–288 constitute an EamA 2 domain; it reads LAFAFGMSLL…ILCSGLLIAL (106 aa).

This sequence belongs to the EamA transporter family.

It is found in the cell membrane. This is an uncharacterized protein from Helicobacter pylori (strain ATCC 700392 / 26695) (Campylobacter pylori).